The chain runs to 143 residues: Putative pre-16S rRNA nuclease (143 aa).

It belongs to the YqgF nuclease family.

The protein resides in the cytoplasm. Functionally, could be a nuclease involved in processing of the 5'-end of pre-16S rRNA. The chain is Putative pre-16S rRNA nuclease from Agathobacter rectalis (strain ATCC 33656 / DSM 3377 / JCM 17463 / KCTC 5835 / VPI 0990) (Eubacterium rectale).